A 474-amino-acid polypeptide reads, in one-letter code: ATP synthase subunit beta 1 (474 aa).

157 to 164 serves as a coordination point for ATP; that stretch reads GGAGVGKT.

Belongs to the ATPase alpha/beta chains family. In terms of assembly, F-type ATPases have 2 components, CF(1) - the catalytic core - and CF(0) - the membrane proton channel. CF(1) has five subunits: alpha(3), beta(3), gamma(1), delta(1), epsilon(1). CF(0) has three main subunits: a(1), b(2) and c(9-12). The alpha and beta chains form an alternating ring which encloses part of the gamma chain. CF(1) is attached to CF(0) by a central stalk formed by the gamma and epsilon chains, while a peripheral stalk is formed by the delta and b chains.

The protein localises to the cell inner membrane. The enzyme catalyses ATP + H2O + 4 H(+)(in) = ADP + phosphate + 5 H(+)(out). In terms of biological role, produces ATP from ADP in the presence of a proton gradient across the membrane. The catalytic sites are hosted primarily by the beta subunits. In Polaromonas naphthalenivorans (strain CJ2), this protein is ATP synthase subunit beta 1.